A 364-amino-acid polypeptide reads, in one-letter code: Ribosomal RNA large subunit methyltransferase F (364 aa).

The segment covering 1 to 17 has biased composition (low complexity); it reads MPKPAIKTAAKPATSSA. Positions 1–53 are disordered; sequence MPKPAIKTAAKPATSSAGKRGKPNTPKSVAKPKTAKPKTASKPKVKPGEKKRL. The segment covering 33–53 has biased composition (basic residues); the sequence is KTAKPKTASKPKVKPGEKKRL.

It belongs to the methyltransferase superfamily. METTL16/RlmF family.

It is found in the cytoplasm. It catalyses the reaction adenosine(1618) in 23S rRNA + S-adenosyl-L-methionine = N(6)-methyladenosine(1618) in 23S rRNA + S-adenosyl-L-homocysteine + H(+). Specifically methylates the adenine in position 1618 of 23S rRNA. The sequence is that of Ribosomal RNA large subunit methyltransferase F from Shewanella sp. (strain MR-7).